The primary structure comprises 197 residues: Heart- and neural crest derivatives-expressed protein 1 (197 aa).

Disordered regions lie at residues 61-94 (VVGPSQTSGRIENLGGKLGRRKGAPPKKERRRTE) and 155-184 (VDGKRRREPQPTEGYWGAAPAGEKKLKGRT). Positions 78–90 (LGRRKGAPPKKER) are enriched in basic residues. Residues 80–132 (RRKGAPPKKERRRTESINSAFAELRECIPNVPADTKLSKIKTLRLATSYIGYL) enclose the bHLH domain.

In terms of assembly, efficient DNA binding requires dimerization with another bHLH protein. In terms of tissue distribution, highly expressed in the adult heart and expressed at lower levels in the intestine and gall bladder.

It localises to the nucleus. Its subcellular location is the nucleolus. Its function is as follows. Plays an essential role in cardiac morphogenesis. In Xenopus laevis (African clawed frog), this protein is Heart- and neural crest derivatives-expressed protein 1 (hand1).